The sequence spans 236 residues: Geranylgeranylglyceryl phosphate synthase (236 aa).

K13 is a binding site for sn-glycerol 1-phosphate. Residues D15 and T42 each contribute to the Mg(2+) site. Residues 161–166 (YVEYSG), G191, and 211–212 (GD) each bind sn-glycerol 1-phosphate.

Belongs to the GGGP/HepGP synthase family. Group I subfamily. It depends on Mg(2+) as a cofactor.

Its subcellular location is the cytoplasm. The enzyme catalyses sn-glycerol 1-phosphate + (2E,6E,10E)-geranylgeranyl diphosphate = sn-3-O-(geranylgeranyl)glycerol 1-phosphate + diphosphate. It functions in the pathway membrane lipid metabolism; glycerophospholipid metabolism. Prenyltransferase that catalyzes the transfer of the geranylgeranyl moiety of geranylgeranyl diphosphate (GGPP) to the C3 hydroxyl of sn-glycerol-1-phosphate (G1P). This reaction is the first ether-bond-formation step in the biosynthesis of archaeal membrane lipids. This is Geranylgeranylglyceryl phosphate synthase from Halobacterium salinarum (strain ATCC 700922 / JCM 11081 / NRC-1) (Halobacterium halobium).